We begin with the raw amino-acid sequence, 841 residues long: Translation initiation factor IF-2 (841 aa).

The tract at residues arginine 87–proline 254 is disordered. Residues serine 96 to arginine 135 are compositionally biased toward basic and acidic residues. A compositionally biased stretch (low complexity) spans serine 136–alanine 175. Composition is skewed to basic and acidic residues over residues aspartate 176–proline 217 and threonine 225–arginine 234. A compositionally biased stretch (basic residues) spans arginine 235–alanine 248. The 170-residue stretch at serine 341 to lysine 510 folds into the tr-type G domain. Residues glycine 350–threonine 357 form a G1 region. Glycine 350–threonine 357 is a binding site for GTP. The segment at glycine 375 to histidine 379 is G2. Residues aspartate 396 to glycine 399 form a G3 region. GTP contacts are provided by residues aspartate 396–histidine 400 and asparagine 450–aspartate 453. Residues asparagine 450–aspartate 453 form a G4 region. The tract at residues serine 486–lysine 488 is G5.

Belongs to the TRAFAC class translation factor GTPase superfamily. Classic translation factor GTPase family. IF-2 subfamily.

The protein localises to the cytoplasm. Its function is as follows. One of the essential components for the initiation of protein synthesis. Protects formylmethionyl-tRNA from spontaneous hydrolysis and promotes its binding to the 30S ribosomal subunits. Also involved in the hydrolysis of GTP during the formation of the 70S ribosomal complex. The chain is Translation initiation factor IF-2 from Pseudomonas syringae pv. syringae (strain B728a).